Reading from the N-terminus, the 411-residue chain is uncharacterized protein (411 aa).

An N-terminal signal peptide occupies residues 1–21; that stretch reads MHSRILLLLLMFAFNVGLINC. The 40-residue stretch at 28-67 folds into the EGF-like domain; the sequence is PQSNCKIRCENGGMCVFDLERPDFHSCICLLGVYTGDRCQ. 3 cysteine pairs are disulfide-bonded: Cys32–Cys42, Cys36–Cys54, and Cys56–Cys66. Residues 78–97 show a composition bias toward polar residues; the sequence is TATSDETSHPMNIQHQQSQA. Disordered regions lie at residues 78 to 312 and 337 to 375; these read TATS…EPIR and HPIE…EYGM. Basic and acidic residues predominate over residues 100 to 230; that stretch reads DDARRRDDER…VEKELNDKRT (131 aa). A compositionally biased stretch (acidic residues) spans 237 to 266; sequence FEYEGGDEEYPQVAEKEDEYDEGYETDNTE. Over residues 267–276 the composition is skewed to low complexity; it reads DVTITTTKTT.

This is an uncharacterized protein from Caenorhabditis elegans.